Consider the following 1216-residue polypeptide: Probable phospholipid-transporting ATPase 4 (1216 aa).

Residues 1 to 74 (MARGRIRSKL…TTRYNLITFF (74 aa)) are Cytoplasmic-facing. The helical transmembrane segment at 75-96 (PKCLYEQFHRAANFYFLVAAIL) threads the bilayer. Residues 97–100 (SVFP) lie on the Extracellular side of the membrane. Residues 101–123 (LSPFNKWSMIAPLVFVVGLSMLK) traverse the membrane as a helical segment. The Cytoplasmic portion of the chain corresponds to 124-305 (EALEDWSRFM…SRIEKTMDYI (182 aa)). A helical membrane pass occupies residues 306 to 327 (IYTLLVLLILISCISSSGFAWE). Over 328–359 (TKFHMPKWWYLRPEEPENLTNPSNPVYAGFVH) the chain is Extracellular. Residues 360-377 (LITALLLYGYLIPISLYV) form a helical membrane-spanning segment. Over 378 to 922 (SIEVVKVLQA…HGHWCYKRIA (545 aa)) the chain is Cytoplasmic. Residue Asp425 is the 4-aspartylphosphate intermediate of the active site. Lys605 participates in a covalent cross-link: Glycyl lysine isopeptide (Lys-Gly) (interchain with G-Cter in ubiquitin). Residues Asp867 and Asp871 each contribute to the Mg(2+) site. The chain crosses the membrane as a helical span at residues 923–942 (QMICYFFYKNIAFGLTLFYF). Residues 943–956 (EAFTGFSGQSVYND) lie on the Extracellular side of the membrane. Residues 957–976 (YYLLLFNVVLTSLPVIALGV) form a helical membrane-spanning segment. Residues 977–1006 (FEQDVSSEICLQFPALYQQGKKNLFFDWYR) are Cytoplasmic-facing. A helical transmembrane segment spans residues 1007–1029 (ILGWMGNGVYSSLVIFFLNIGII). The Extracellular portion of the chain corresponds to 1030–1042 (YEQAFRVSGQTAD). Residues 1043–1065 (MDAVGTTMFTCIIWAVNVQIALT) form a helical membrane-spanning segment. The Cytoplasmic segment spans residues 1066–1071 (VSHFTW). Residues 1072–1092 (IQHVLIWGSIGLWYLFVALYG) traverse the membrane as a helical segment. The Extracellular portion of the chain corresponds to 1093-1109 (MMPPSLSGNIYRILVEI). A helical membrane pass occupies residues 1110 to 1134 (LAPAPIYWIATFLVTVTTVLPYFAH). Residues 1135–1216 (ISFQRFLHPL…TQDTMSPRSV (82 aa)) are Cytoplasmic-facing. Residues 1195–1216 (LNKKQSNMSQFSTQDTMSPRSV) are disordered. Over residues 1198-1216 (KQSNMSQFSTQDTMSPRSV) the composition is skewed to polar residues.

The protein belongs to the cation transport ATPase (P-type) (TC 3.A.3) family. Type IV subfamily.

Its subcellular location is the membrane. The catalysed reaction is ATP + H2O + phospholipidSide 1 = ADP + phosphate + phospholipidSide 2.. Functionally, involved in transport of phospholipids. In Arabidopsis thaliana (Mouse-ear cress), this protein is Probable phospholipid-transporting ATPase 4.